A 478-amino-acid polypeptide reads, in one-letter code: ATP synthase subunit beta (478 aa).

ATP is bound at residue 151-158; the sequence is GGAGVGKT.

It belongs to the ATPase alpha/beta chains family. F-type ATPases have 2 components, CF(1) - the catalytic core - and CF(0) - the membrane proton channel. CF(1) has five subunits: alpha(3), beta(3), gamma(1), delta(1), epsilon(1). CF(0) has three main subunits: a(1), b(2) and c(9-12). The alpha and beta chains form an alternating ring which encloses part of the gamma chain. CF(1) is attached to CF(0) by a central stalk formed by the gamma and epsilon chains, while a peripheral stalk is formed by the delta and b chains.

It localises to the cell inner membrane. It catalyses the reaction ATP + H2O + 4 H(+)(in) = ADP + phosphate + 5 H(+)(out). Its function is as follows. Produces ATP from ADP in the presence of a proton gradient across the membrane. The catalytic sites are hosted primarily by the beta subunits. The chain is ATP synthase subunit beta from Xanthobacter autotrophicus (strain ATCC BAA-1158 / Py2).